A 282-amino-acid polypeptide reads, in one-letter code: MDQRNKTLRDLPWEGERLSFFHDLVEYSFLRTAFVGGILVASLSGLVSPIVVFRRMEFIGDGTAHAVFAGLAAATLIGADHRLIAFATALLFAFAVSLFSRSRISESSAIGILLPFFMAVGVVLFSVSGRYQTDVMGYLFGDVLLVNSTDVAITAVVLALSVILTVVFRWDIKYFIVDEKMARFYGIKTDLIRFLITSFIAITVVTTVKVVGVILTGALLILPGLVSKIFGKSFWSLTTISVIFSTGVFFAGFLTAYTLDLPPGPVIVIIAFVSFLPMLKFS.

A run of 9 helical transmembrane segments spans residues Ala-33–Phe-53, Phe-58–Gly-78, Ala-79–Phe-99, Ala-109–Gly-129, Ser-148–Phe-168, Phe-184–Val-204, Val-210–Phe-230, Phe-234–Leu-254, and Leu-259–Leu-279.

Belongs to the ABC-3 integral membrane protein family.

The protein resides in the cell inner membrane. Its function is as follows. Part of an ATP-driven transport system TM_0123/TM_0124/TM_0125 for a metal. In Thermotoga maritima (strain ATCC 43589 / DSM 3109 / JCM 10099 / NBRC 100826 / MSB8), this protein is Probable metal transport system membrane protein TM_0125.